A 78-amino-acid chain; its full sequence is Neurogranin (78 aa).

Residue Met1 is modified to N-acetylmethionine. Positions 26–49 (ANAAAAKIQASFRGHMARKKIKSG) constitute an IQ domain. A Phosphoserine; by PHK and PKC modification is found at Ser36. The segment at 38–78 (RGHMARKKIKSGERGRKGPGPGGPGGAGGARGGAGGGPSGD) is disordered. Residues 50–78 (ERGRKGPGPGGPGGAGGARGGAGGGPSGD) form the Collagen-like domain. The span at 55–78 (GPGPGGPGGAGGARGGAGGGPSGD) shows a compositional bias: gly residues. Arg68 is modified (citrulline; partial). Arg68 is subject to Omega-N-methylarginine.

This sequence belongs to the neurogranin family. The N-terminus is blocked. In terms of processing, phosphorylated at Ser-36 by PHK and PKC. Phosphorylation prevents interaction with Calmodulin and interrupts several learning- and memory-associated functions. In terms of tissue distribution, is highly enriched in brain. Accumulates postsynaptically in dendritic spines of neostriatal neurons.

In terms of biological role, acts as a 'third messenger' substrate of protein kinase C-mediated molecular cascades during synaptic development and remodeling. Binds to calmodulin in the absence of calcium. The sequence is that of Neurogranin (NRGN) from Bos taurus (Bovine).